Consider the following 257-residue polypeptide: Pyridoxal phosphate homeostasis protein (257 aa).

Ser2 carries the post-translational modification N-acetylserine. At Lys49 the chain carries N6-(pyridoxal phosphate)lysine.

The protein belongs to the pyridoxal phosphate-binding protein YggS/PROSC family.

It is found in the cytoplasm. It localises to the nucleus. Pyridoxal 5'-phosphate (PLP)-binding protein, which may be involved in intracellular homeostatic regulation of pyridoxal 5'-phosphate (PLP), the active form of vitamin B6. In Saccharomyces cerevisiae (strain ATCC 204508 / S288c) (Baker's yeast), this protein is Pyridoxal phosphate homeostasis protein.